The sequence spans 58 residues: uncharacterized protein (58 aa).

A helical transmembrane segment spans residues Phe-5–Ile-27.

Its subcellular location is the membrane. This is an uncharacterized protein from Saccharomyces cerevisiae (strain ATCC 204508 / S288c) (Baker's yeast).